Here is a 125-residue protein sequence, read N- to C-terminus: Small ribosomal subunit protein uS12 (125 aa).

The residue at position 89 (D89) is a 3-methylthioaspartic acid. A disordered region spans residues 106-125 (GVKDRKQSRSKYGAKRPKKA). Residues 113–125 (SRSKYGAKRPKKA) are compositionally biased toward basic residues.

It belongs to the universal ribosomal protein uS12 family. As to quaternary structure, part of the 30S ribosomal subunit. Contacts proteins S8 and S17. May interact with IF1 in the 30S initiation complex.

Functionally, with S4 and S5 plays an important role in translational accuracy. In terms of biological role, interacts with and stabilizes bases of the 16S rRNA that are involved in tRNA selection in the A site and with the mRNA backbone. Located at the interface of the 30S and 50S subunits, it traverses the body of the 30S subunit contacting proteins on the other side and probably holding the rRNA structure together. The combined cluster of proteins S8, S12 and S17 appears to hold together the shoulder and platform of the 30S subunit. This is Small ribosomal subunit protein uS12 from Azoarcus sp. (strain BH72).